The chain runs to 88 residues: uncharacterized protein (88 aa).

The next 2 membrane-spanning stretches (helical) occupy residues 5–25 (AIPF…LLFV) and 36–56 (CYYL…VMIF).

It localises to the membrane. This is an uncharacterized protein from Saccharomyces cerevisiae (strain ATCC 204508 / S288c) (Baker's yeast).